Consider the following 41-residue polypeptide: GKIPIGAIKKAGKAIGKGLRAVNIASTAHDVYTFFKPKKRH.

Residue His41 is modified to Histidine amide.

Monomer. As to expression, hemolymph.

It localises to the secreted. Has antibacterial activity against Gram-positive and Gram-negative bacteria. The protein is Virescein of Heliothis virescens (Tobacco budworm moth).